The following is a 419-amino-acid chain: Synaptosomal-associated protein 47 (419 aa).

T-SNARE coiled-coil homology domains follow at residues 108 to 170 and 356 to 418; these read PQGA…LSEL and VLQP…MRKL.

Belongs to the SVAP1 family.

Its function is as follows. May play a role in intracellular membrane fusion. The sequence is that of Synaptosomal-associated protein 47 (snap47) from Danio rerio (Zebrafish).